Reading from the N-terminus, the 472-residue chain is Eukaryotic translation initiation factor 2 subunit 3 (472 aa).

Position 2 is an N-acetylalanine; partial (alanine 2). Serine 16 carries the post-translational modification Phosphoserine. Residues 39–248 form the tr-type G domain; sequence QATINIGTIG…IVKKIPVPPR (210 aa). Residues 48 to 55 are G1; that stretch reads GHVAHGKS. 51 to 56 lines the GTP pocket; sequence AHGKST. Residues 76–80 are G2; it reads NITIK. The tract at residues 134–137 is G3; it reads DCPG. Residues 190–193 and 225–227 contribute to the GTP site; these read NKID and SAQ. The interval 190 to 193 is G4; it reads NKID. The segment at 225–227 is G5; it reads SAQ. Positions 457 to 469 are interacts with CDC123; sequence GQIRRGVTIKPTV.

This sequence belongs to the TRAFAC class translation factor GTPase superfamily. Classic translation factor GTPase family. EIF2G subfamily. Eukaryotic translation initiation factor 2 eIF2 is a heterotrimeric complex composed of an alpha (EIF2S1), a beta (EIF2S2) and a gamma (EIF2S3) chain. eIF2 is member of the 43S pre-initiation complex (43S PIC). Interacts (via C-terminus) with CDC123; the interaction is direct. As to expression, expressed in testis, brain, liver and muscle.

Its subcellular location is the cytoplasm. It is found in the cytosol. The enzyme catalyses GTP + H2O = GDP + phosphate + H(+). In terms of biological role, member of the eIF2 complex that functions in the early steps of protein synthesis by forming a ternary complex with GTP and initiator tRNA. This complex binds to a 40S ribosomal subunit, followed by mRNA binding to form the 43S pre-initiation complex (43S PIC). Junction of the 60S ribosomal subunit to form the 80S initiation complex is preceded by hydrolysis of the GTP bound to eIF2 and release of an eIF2-GDP binary complex. In order for eIF2 to recycle and catalyze another round of initiation, the GDP bound to eIF2 must exchange with GTP by way of a reaction catalyzed by eIF-2B. The chain is Eukaryotic translation initiation factor 2 subunit 3 (EIF2S3) from Homo sapiens (Human).